The sequence spans 454 residues: Protein odr-4 homolog (454 aa).

2 helical membrane passes run 82 to 102 and 432 to 452; these read MLPGGLLVLGVFIITTLELAN and IGVIAAFTVAVLAAGISFHYF.

Belongs to the ODR-4 family. As to expression, ubiquitously expressed.

Its subcellular location is the membrane. Its function is as follows. May play a role in the trafficking of a subset of G-protein coupled receptors. The polypeptide is Protein odr-4 homolog (Homo sapiens (Human)).